The primary structure comprises 51 residues: ATP synthase F(1) complex subunit epsilon, mitochondrial (51 aa).

Lys-21, Lys-32, and Lys-37 each carry N6-acetyllysine; alternate. Residues Lys-21, Lys-32, and Lys-37 each carry the N6-succinyllysine; alternate modification. Lys-44 is modified (N6-acetyllysine).

This sequence belongs to the eukaryotic ATPase epsilon family. Component of the ATP synthase complex composed at least of ATP5F1A/subunit alpha, ATP5F1B/subunit beta, ATP5MC1/subunit c (homooctomer), MT-ATP6/subunit a, MT-ATP8/subunit 8, ATP5ME/subunit e, ATP5MF/subunit f, ATP5MG/subunit g, ATP5MK/subunit k, ATP5MJ/subunit j, ATP5F1C/subunit gamma, ATP5F1D/subunit delta, ATP5F1E/subunit epsilon, ATP5PF/subunit F6, ATP5PB/subunit b, ATP5PD/subunit d, ATP5PO/subunit OSCP. ATP synthase complex consists of a soluble F(1) head domain (subunits alpha(3) and beta(3)) - the catalytic core - and a membrane F(0) domain - the membrane proton channel (subunits c, a, 8, e, f, g, k and j). These two domains are linked by a central stalk (subunits gamma, delta, and epsilon) rotating inside the F1 region and a stationary peripheral stalk (subunits F6, b, d, and OSCP).

Its subcellular location is the mitochondrion. The protein localises to the mitochondrion inner membrane. Subunit epsilon, of the mitochondrial membrane ATP synthase complex (F(1)F(0) ATP synthase or Complex V) that produces ATP from ADP in the presence of a proton gradient across the membrane which is generated by electron transport complexes of the respiratory chain. ATP synthase complex consist of a soluble F(1) head domain - the catalytic core - and a membrane F(1) domain - the membrane proton channel. These two domains are linked by a central stalk rotating inside the F(1) region and a stationary peripheral stalk. During catalysis, ATP synthesis in the catalytic domain of F(1) is coupled via a rotary mechanism of the central stalk subunits to proton translocation. In vivo, can only synthesize ATP although its ATP hydrolase activity can be activated artificially in vitro. May be essential for the assembly of F(1) and may play an important role in the incorporation of the hydrophobic subunit c into the F(1)-c oligomer rotor of the mitochondrial ATP synthase complex. This chain is ATP synthase F(1) complex subunit epsilon, mitochondrial, found in Rattus norvegicus (Rat).